The sequence spans 682 residues: Methionine--tRNA ligase (682 aa).

The 'HIGH' region signature appears at 15-25 (PYANGAIHLGH). Residues Cys146, Cys149, Cys159, and Cys162 each coordinate Zn(2+). The short motif at 331-335 (KMSKS) is the 'KMSKS' region element. Residue Lys334 coordinates ATP. The tRNA-binding domain occupies 580-682 (DLAKLDMRVA…NGVTAGMQVK (103 aa)).

Belongs to the class-I aminoacyl-tRNA synthetase family. MetG type 1 subfamily. In terms of assembly, homodimer. It depends on Zn(2+) as a cofactor.

The protein localises to the cytoplasm. The enzyme catalyses tRNA(Met) + L-methionine + ATP = L-methionyl-tRNA(Met) + AMP + diphosphate. Functionally, is required not only for elongation of protein synthesis but also for the initiation of all mRNA translation through initiator tRNA(fMet) aminoacylation. This Haemophilus influenzae (strain 86-028NP) protein is Methionine--tRNA ligase.